Reading from the N-terminus, the 223-residue chain is Rab-like protein 2A (223 aa).

GTP-binding positions include glycine 28 to serine 35, aspartate 76 to glutamine 80, and asparagine 133 to aspartate 136. Residues lysine 200–serine 223 are disordered. Positions glycine 210–serine 223 are enriched in polar residues.

This sequence belongs to the small GTPase superfamily. Rab family. Interacts with IFT27, IFT81, IFT172, ATP6V1E1, HK1, LDHC, MAPRE1 and HSPA2. Isoform 2 is expressed in the testis and localizes to the mid-piece of the sperm tail (at protein level). Isoform 2 is expressed at higher levels in testis than isoform 1. Isoform 1 and isoform 2 are widely expressed and notably within other tissues containing motile cilia including the lung, trachea, brain, ovary and kidney.

In terms of biological role, plays an essential role in male fertility, sperm intra-flagellar transport, and tail assembly. Binds, in a GTP-regulated manner, to a specific set of effector proteins including key proteins involved in cilia development and function and delivers them into the growing sperm tail. In Mus musculus (Mouse), this protein is Rab-like protein 2A (Rabl2).